A 634-amino-acid chain; its full sequence is Alpha-L-iduronidase (634 aa).

The N-terminal stretch at 1–16 (MLTFFAAFLAAPLALA) is a signal peptide. Residues proline 44, leucine 46, and histidine 48 each contribute to the alpha-D-mannopyranose site. Residue histidine 81 coordinates alpha-L-iduronate. The N-linked (GlcNAc...) asparagine glycan is linked to asparagine 100. Asparagine 171 and glutamate 172 together coordinate alpha-L-iduronate. Glutamate 172 acts as the Proton donor in catalysis. N-linked (GlcNAc...) asparagine glycosylation is found at asparagine 180 and asparagine 233. Alpha-L-iduronate is bound by residues lysine 254, glutamate 289, and glycine 295. Residue glutamate 289 is the Nucleophile of the active site. Tryptophan 296 serves as a coordination point for alpha-D-mannopyranose. An N-linked (GlcNAc...) asparagine glycan is attached at asparagine 326. Positions 339 and 353 each coordinate alpha-L-iduronate. Residues asparagine 362, asparagine 405, and asparagine 441 are each glycosylated (N-linked (GlcNAc...) asparagine). A disulfide bond links cysteine 531 and cysteine 567.

Belongs to the glycosyl hydrolase 39 family. As to quaternary structure, monomer. Post-translationally, N-glycosylation contributes to substrate binding and is required for full enzymatic activity. In terms of tissue distribution, ubiquitous.

The protein localises to the lysosome. It carries out the reaction Hydrolysis of unsulfated alpha-L-iduronosidic linkages in dermatan sulfate.. This Mus musculus (Mouse) protein is Alpha-L-iduronidase (Idua).